Consider the following 1842-residue polypeptide: Fatty acid synthase alpha subunit pigJ (1842 aa).

A disordered region spans residues 120 to 184 (GAPVEEEGSK…TPAGGSTTPD (65 aa)). Over residues 140 to 175 (SGSSRTATTAKATVTTPSSSSPETAPPAASTPSQGT) the composition is skewed to low complexity. The Carrier domain occupies 184-262 (DIPLSAKHVV…DALQGNFPGK (79 aa)). At Ser222 the chain carries O-(pantetheine 4'-phosphoryl)serine. The tract at residues 611 to 807 (GKTVLVTGAG…CGAAIGWVRG (197 aa)) is beta-ketoacyl reductase. A Ketosynthase family 3 (KS3) domain is found at 1058–1585 (KEFLQEIVVE…QKGGIAVVVA (528 aa)). Active-site for beta-ketoacyl synthase activity residues include Cys1244, His1470, and His1511. A disordered region spans residues 1649-1672 (KARVGGHPENNNNNNNNSSSKRNT). Low complexity predominate over residues 1658–1668 (NNNNNNNNSSS). 3 residues coordinate Mg(2+): Asp1725, Val1726, and Glu1727. Acetyl-CoA is bound by residues 1725–1727 (DVE), Ser1761, 1770–1780 (EAVFKSLQTPS), and 1823–1825 (ITH). The Mg(2+) site is built by Thr1824 and His1825.

This sequence belongs to the thiolase-like superfamily. Fungal fatty acid synthetase subunit alpha family. In terms of assembly, [Alpha(6)beta(6)] hexamers of two multifunctional subunits (alpha and beta).

It carries out the reaction acetyl-CoA + n malonyl-CoA + 2n NADPH + 4n H(+) = a long-chain-acyl-CoA + n CoA + n CO2 + 2n NADP(+).. The catalysed reaction is a fatty acyl-[ACP] + malonyl-[ACP] + H(+) = a 3-oxoacyl-[ACP] + holo-[ACP] + CO2. It catalyses the reaction a (3R)-hydroxyacyl-[ACP] + NADP(+) = a 3-oxoacyl-[ACP] + NADPH + H(+). It participates in secondary metabolite biosynthesis. Its function is as follows. Fatty acid synthase alpha subunit; part of the gene cluster that mediates the biosynthesis of azaphilone pigments (MonAzPs), a complex mixture of compounds with a common azaphilone skeleton very widely used as food colorants. PigJ and pigK form the two subunits of a dedicated fungal fatty acid synthase (FAS) that produces the side chain fatty acyl moiety of MonAzPs, a beta-keto fatty acid. The chain length control of the pigJ-pigK FAS is somewhat flexible as MonAzPs features either a beta-ketooctanoic or a beta-ketodecanoic acid moiety. The beta-ketoacyl-ACP probably serves as the substrate for the acetyltransferase pigD that directly transfers the fatty acyl chain to the C-4 alcohol of the pyran ring. The first step of the pathway is performed by the nrPKS pigA that forms the hexaketide precursor from successive condensations of five malonyl-CoA units, with a simple acetyl-CoA starter unit. The role of esterase pigG is not clear, but it may play at most a supplementary role in the formation of the benzaldehyde produced by the pigA nrPKS. This very reactive benzaldehyde is intercepted by the pigC ketoreductase that to provide the first stable enzyme-free MonAzPs intermediate, 6-(4-hydroxy-2-oxopentyl)-3-methyl-2,4-dioxocyclohexane carbaldehyde, also known as M7PKS-1. The FAD-dependent monooxygenase pigN hydroxylates M7PKS-1 at C-4, which triggers the formation of the pyran ring. PigJ, pigK and pigD are involved in the acetylation of the pyran ring. PigJ and pigK form the two subunits of a dedicated fungal FAS that produces the side chain fatty acyl moiety of MonAzPs and pigD transfers the fatty acyl chain to the C-4 alcohol. PigM and pigO are involved in the elimination of the omega-1 alcohol. PigM acts as an O-acetyltransferase that synthesizes the putative O-11 acetyl intermediate whereas pigO eliminates acetic acid to yield an intermediate with a C10(11) double bond. The dehydration of the C-11 alcohol followed by the reduction of the C6(7) double bond by the NAD(P)H-dependent oxidoreductase pigE increases the electrophilicity of the C-5 ketone of the resulting acyl benzopyran. This in turn sets up the C-5 ketone for an intramolecular Knoevenagel aldol condensation with the C-20 enol of the side chain. This condensation affords the characteristic linear tricyclic carbon skeletons of the yellow pigments that serve as the common precursors for the classical yellow pigments monascin and ankaflavin, orange pigments rubopunctatin and monascorubrin, and red pigments ribropunctamine and monascorubramine. The FAD-dependent oxidoreductase pigF is especially invoved in the biosynthesis of orange and red pigments via desaturation of C6(7). This Monascus ruber (Mold) protein is Fatty acid synthase alpha subunit pigJ.